The sequence spans 594 residues: SHC-transforming protein 3 (594 aa).

A disordered region spans residues 98 to 147 (GSCSAPSLAAPDGSAPSAPRAPAMSAARKGRPGDEPLPRPPRGAPHASDQ). Residues 101 to 124 (SAPSLAAPDGSAPSAPRAPAMSAA) are compositionally biased toward low complexity. The PID domain occupies 149 to 334 (LGPGVTYVVK…LDEPWTEEEG (186 aa)). The interval 335–498 (DGSDHPYYNS…KMLEELQAET (164 aa)) is CH1. 2 disordered regions span residues 351–373 (PPGG…AQFA) and 386–405 (GDTF…SSDI). Residues 393 to 405 (WQQTPLRQGSSDI) show a composition bias toward polar residues. S402 carries the phosphoserine modification. Residues 499 to 590 (WYQGEMSRKE…GSELCLQQPV (92 aa)) enclose the SH2 domain.

As to quaternary structure, interacts with the Trk receptors in a phosphotyrosine-dependent manner. Once activated, binds to GRB2. Interacts with activated EGF receptors. Tyrosine phosphorylated. Mainly expressed in brain. Hardly detectable in other tissues, except in pancreas. Highly expressed in the cerebral cortex, frontal and temporal lobes, occipital pole, hippocampus, caudate nucleus and amygdala. Expressed at low level in the cerebellum, medulla and spinal cord.

In terms of biological role, signaling adapter that couples activated growth factor receptors to signaling pathway in neurons. Involved in the signal transduction pathways of neurotrophin-activated Trk receptors in cortical neurons. The protein is SHC-transforming protein 3 (SHC3) of Homo sapiens (Human).